Here is a 2540-residue protein sequence, read N- to C-terminus: Probable JmjC domain-containing histone demethylation protein 2C (2540 aa).

Over residues threonine 278–isoleucine 309 the composition is skewed to polar residues. Positions threonine 278 to leucine 478 are disordered. Phosphoserine occurs at positions 317 and 320. Residues aspartate 323–lysine 342 show a composition bias toward basic and acidic residues. Residues glycine 343 to arginine 353 are compositionally biased toward basic residues. Residues lysine 354–asparagine 371 show a composition bias toward basic and acidic residues. Residues serine 373 and serine 376 each carry the phosphoserine modification. Residues serine 373–glutamate 382 show a composition bias toward low complexity. 3 stretches are compositionally biased toward basic and acidic residues: residues asparagine 383–asparagine 403, asparagine 410–leucine 427, and glutamine 438–valine 452. The span at serine 464–leucine 478 shows a compositional bias: polar residues. A phosphoserine mark is found at serine 475 and serine 501. Threonine 505 is modified (phosphothreonine). Serine 601, serine 617, serine 638, serine 639, serine 641, serine 652, and serine 943 each carry phosphoserine. Residues valine 631 to valine 656 form a disordered region. Disordered regions lie at residues glycine 1242–asparagine 1263 and asparagine 1614–threonine 1692. Over residues lysine 1643–lysine 1652 the composition is skewed to basic residues. The segment covering lysine 1653 to lysine 1669 has biased composition (basic and acidic residues). The C6-type zinc finger occupies cysteine 1846–cysteine 1871. Residues proline 1971–glutamate 1991 are compositionally biased toward polar residues. The interval proline 1971–serine 2064 is disordered. Serine 1989 carries the post-translational modification Phosphoserine. The segment covering alanine 2016–aspartate 2043 has biased composition (basic and acidic residues). A compositionally biased stretch (polar residues) spans serine 2045–serine 2064. The short motif at leucine 2066–leucine 2070 is the LXXLL motif element. Glycyl lysine isopeptide (Lys-Gly) (interchain with G-Cter in SUMO2) cross-links involve residues lysine 2132 and lysine 2136. The JmjC domain occupies methionine 2274–arginine 2498. Residues histidine 2336, glutamate 2338, and histidine 2466 each coordinate Fe cation.

It belongs to the JHDM2 histone demethylase family. In terms of assembly, interacts specifically with the ligand-binding domain of the thyroid receptor (TR). Requires the presence of thyroid hormone for its interaction. Requires Fe(2+) as cofactor.

The protein localises to the nucleus. In terms of biological role, probable histone demethylase that specifically demethylates 'Lys-9' of histone H3, thereby playing a central role in histone code. Demethylation of Lys residue generates formaldehyde and succinate. May be involved in hormone-dependent transcriptional activation, by participating in recruitment to androgen-receptor target genes. In Homo sapiens (Human), this protein is Probable JmjC domain-containing histone demethylation protein 2C (JMJD1C).